The primary structure comprises 106 residues: UPF0145 protein FTL_1249 (106 aa).

It belongs to the UPF0145 family.

The chain is UPF0145 protein FTL_1249 from Francisella tularensis subsp. holarctica (strain LVS).